A 320-amino-acid chain; its full sequence is ATP-dependent 6-phosphofructokinase (320 aa).

ATP contacts are provided by residues G12, 73 to 74 (RF), and 103 to 106 (GDGS). Position 104 (D104) interacts with Mg(2+). 126 to 128 (TID) contributes to the substrate binding site. The active-site Proton acceptor is the D128. R155 provides a ligand contact to ADP. Substrate-binding positions include R163 and 170 to 172 (MGR). ADP-binding positions include 186 to 188 (GCE) and K212. Substrate is bound by residues E223, R244, and 250 to 253 (HIQR).

Belongs to the phosphofructokinase type A (PFKA) family. ATP-dependent PFK group I subfamily. Prokaryotic clade 'B1' sub-subfamily. Homotetramer. Mg(2+) is required as a cofactor.

The protein localises to the cytoplasm. It carries out the reaction beta-D-fructose 6-phosphate + ATP = beta-D-fructose 1,6-bisphosphate + ADP + H(+). The protein operates within carbohydrate degradation; glycolysis; D-glyceraldehyde 3-phosphate and glycerone phosphate from D-glucose: step 3/4. Allosterically activated by ADP and other diphosphonucleosides, and allosterically inhibited by phosphoenolpyruvate. Catalyzes the phosphorylation of D-fructose 6-phosphate to fructose 1,6-bisphosphate by ATP, the first committing step of glycolysis. The polypeptide is ATP-dependent 6-phosphofructokinase (Buchnera aphidicola subsp. Cinara cedri (strain Cc)).